The following is a 403-amino-acid chain: Phosphopentomutase (403 aa).

Mn(2+)-binding residues include aspartate 13, aspartate 298, histidine 303, aspartate 339, histidine 340, and histidine 351.

Belongs to the phosphopentomutase family. It depends on Mn(2+) as a cofactor.

Its subcellular location is the cytoplasm. The enzyme catalyses 2-deoxy-alpha-D-ribose 1-phosphate = 2-deoxy-D-ribose 5-phosphate. It catalyses the reaction alpha-D-ribose 1-phosphate = D-ribose 5-phosphate. It participates in carbohydrate degradation; 2-deoxy-D-ribose 1-phosphate degradation; D-glyceraldehyde 3-phosphate and acetaldehyde from 2-deoxy-alpha-D-ribose 1-phosphate: step 1/2. Functionally, isomerase that catalyzes the conversion of deoxy-ribose 1-phosphate (dRib-1-P) and ribose 1-phosphate (Rib-1-P) to deoxy-ribose 5-phosphate (dRib-5-P) and ribose 5-phosphate (Rib-5-P), respectively. The protein is Phosphopentomutase of Streptococcus pyogenes serotype M12 (strain MGAS2096).